Here is a 329-residue protein sequence, read N- to C-terminus: tRNA pseudouridine synthase B (329 aa).

D42 acts as the Nucleophile in catalysis.

This sequence belongs to the pseudouridine synthase TruB family. Type 1 subfamily.

It catalyses the reaction uridine(55) in tRNA = pseudouridine(55) in tRNA. Responsible for synthesis of pseudouridine from uracil-55 in the psi GC loop of transfer RNAs. The chain is tRNA pseudouridine synthase B from Lactococcus lactis subsp. lactis (strain IL1403) (Streptococcus lactis).